The chain runs to 151 residues: Putative pre-16S rRNA nuclease (151 aa).

It belongs to the YqgF nuclease family.

It is found in the cytoplasm. Functionally, could be a nuclease involved in processing of the 5'-end of pre-16S rRNA. This chain is Putative pre-16S rRNA nuclease, found in Neisseria gonorrhoeae (strain ATCC 700825 / FA 1090).